A 480-amino-acid chain; its full sequence is ESX-1 secretion system ATPase EccB1 (480 aa).

A helical membrane pass occupies residues isoleucine 44 to phenylalanine 64. Residues aspartate 461–proline 480 are disordered.

Belongs to the EccB family. As to quaternary structure, part of the ESX-1 / type VII secretion system (T7SS), which is composed of cytosolic and membrane components. The ESX-1 membrane complex is composed of EccB1, EccCa1, EccCb1, EccD1 and EccE1.

The protein resides in the cell inner membrane. In terms of biological role, an ATPase. Part of the ESX-1 specialized secretion system, which delivers several virulence factors to host cells during infection, including the key virulence factors EsxA (ESAT-6) and EsxB (CFP-10). This is ESX-1 secretion system ATPase EccB1 from Mycobacterium tuberculosis (strain CDC 1551 / Oshkosh).